Consider the following 372-residue polypeptide: Isoliquiritigenin 2'-O-methyltransferase (372 aa).

S-adenosyl-L-methionine-binding residues include Gly217, Asp240, Asp260, Met261, and Lys274. The active-site Proton acceptor is the His278.

It belongs to the class I-like SAM-binding methyltransferase superfamily. Cation-independent O-methyltransferase family. COMT subfamily. As to quaternary structure, monomer. Homodimer. As to expression, roots (at protein level). Expressed mainly in roots, and to a lesser extent in root nodules. In the roots, expression is not detected in the root tip or the cells immediately behind the tip, but is detected in tissues starting 1.5-2.0 mm distal to the root tip. Detected in the epidermal and cortical cells of 2 day old roots, with lower levels in vascular tissue.

It carries out the reaction isoliquiritigenin + S-adenosyl-L-methionine = 2'-O-methylisoliquiritigenin + S-adenosyl-L-homocysteine + H(+). The enzyme catalyses licodione + S-adenosyl-L-methionine = 2'-O-methyllicodione + S-adenosyl-L-homocysteine + H(+). With respect to regulation, inhibited by 1 mM Co(2+), Cu(2+), Zn(2+) or Fe(2+). Non-competitively inhibited by S-adenosyl-L-homocysteine. Competitively inhibited by 2'-O-methylisoliquiritigenin. Its function is as follows. Methylates the 2'-hydroxyl of isoliquiritigenin and licodione. Does not methylate narigenin chalcone, caffeic acid or daidzein. Involved in the root nodulation initiation by promoting the biosynthesis of nod-inducing molecules. The chain is Isoliquiritigenin 2'-O-methyltransferase from Medicago sativa (Alfalfa).